A 208-amino-acid polypeptide reads, in one-letter code: Small ribosomal subunit protein uS4 (208 aa).

Residues Leu-98–Ala-159 form the S4 RNA-binding domain.

This sequence belongs to the universal ribosomal protein uS4 family. Part of the 30S ribosomal subunit. Contacts protein S5. The interaction surface between S4 and S5 is involved in control of translational fidelity.

In terms of biological role, one of the primary rRNA binding proteins, it binds directly to 16S rRNA where it nucleates assembly of the body of the 30S subunit. With S5 and S12 plays an important role in translational accuracy. The polypeptide is Small ribosomal subunit protein uS4 (Acidithiobacillus ferrooxidans (strain ATCC 23270 / DSM 14882 / CIP 104768 / NCIMB 8455) (Ferrobacillus ferrooxidans (strain ATCC 23270))).